Consider the following 768-residue polypeptide: Solabiose phosphorylase (768 aa).

The Proton donor role is filled by Asp456.

The protein belongs to the glycosyl hydrolase 94 family.

It carries out the reaction solabiose + phosphate = D-galactose + alpha-D-glucose 1-phosphate. In terms of biological role, catalyzes the reversible phosphorolysis of solabiose. Catalyzes the phosphorolysis and synthesis of solabiose through a sequential bi-bi mechanism involving the formation of a ternary complex. Is probably involved in the metabolism of solabiose released from solabiose-containing compounds. The chain is Solabiose phosphorylase from Paenibacillus borealis.